An 878-amino-acid polypeptide reads, in one-letter code: MASPSSRLLKFITNGSKLHSAKNNNMIKNKNIISPTITKLFSTSKISNEIGNIRNFNNKISTNLINSNINTKPFFEIPKLFEKKYYSYIPPTWEEKDKEKQFNSITSTREEGGDNEESNRMGNGSIKDAIVWVNHLYPIKVSRLDFRSLFFHIPITKKLNSLFPNDVKIISIEKRIKEGGAYIHFQYDSSNPEYKSIEMVMSKLKSIFAQEKKHFHFASRPAKCKLVYGRPFVEDIDYRFPSTTLKITFKGSEMSPDDLFRLMRPYGHIKDIHYSSPIPSKDGPRQATITFKRMEGAIATRNCLHNKYFPEFNTSLYMDYEQLMRINKLKEQFSKHPKIMIPLLGILATLLTLLLFNPLREYFINKKLSSPCYFGEQEEDDWQERSEQKVLQTHFNFPPNSIVMISAPKGSGKSSLIDKVLENRINTLLIDCNQEVNNNDEEFIESFSKDIGFSPSYSLYSSFGSVIDAIIPTGKGAFHSTTNYQMQTILKLLDEVLAKKAKQFPVDPHQPYEYPLIVIDGFFGMIQAMESKEKANIIMDSVIQWAITSTQRGHAHVVFLSSDSFAGDIIKKYLDNRGGGQISTIQLGDVQPSMAINYIKKRIGPNTPITQHDMELVVDNLGGRYYDLNVLSQRMIAGDSVERALSNMISKAVSEIRAEGFGLSKRNDDSKIGGTKLKWSRPQLWETIKKIAENDFVSYDDLLFNVFLGDESSLNNLISSNLLRFQNVDNERKVTAYSPLYCSAFKQMVNDLEFNVGMDVLVQKARIEEELSKLSKVEDELLKIKNLTSKSWFEPLSIKKRRILLEDKLKDHVAKIEHRENILKKHSLFQKFLREEQMIQMELIKKQREQSKFERQQQQLLQQQQLQQQQQQQQQGSI.

Residues methionine 1 to lysine 338 lie on the Mitochondrial matrix side of the membrane. A disordered region spans residues glutamate 99–arginine 120. The region spanning glycine 229–leucine 323 is the RRM domain. Residues isoleucine 339–leucine 359 form a helical membrane-spanning segment. Topologically, residues arginine 360–isoleucine 878 are mitochondrial intermembrane. Residues leucine 761–glutamine 873 are a coiled coil.

The protein belongs to the YME2 family.

Its subcellular location is the mitochondrion inner membrane. Functionally, plays a role in maintaining the mitochondrial genome. May have a dispensable role in early maturation of pre-rRNA. This chain is Mitochondrial escape protein 2 homolog (yme2), found in Dictyostelium discoideum (Social amoeba).